A 559-amino-acid chain; its full sequence is DNA ligase (559 aa).

Glu-247 contacts ATP. Lys-249 acts as the N6-AMP-lysine intermediate in catalysis. Residues Arg-254, Arg-269, Glu-299, Phe-339, Arg-414, and Lys-420 each coordinate ATP.

Belongs to the ATP-dependent DNA ligase family. As to quaternary structure, monomer. It depends on Mg(2+) as a cofactor.

The enzyme catalyses ATP + (deoxyribonucleotide)n-3'-hydroxyl + 5'-phospho-(deoxyribonucleotide)m = (deoxyribonucleotide)n+m + AMP + diphosphate.. It carries out the reaction NAD(+) + (deoxyribonucleotide)n-3'-hydroxyl + 5'-phospho-(deoxyribonucleotide)m = (deoxyribonucleotide)n+m + AMP + beta-nicotinamide D-nucleotide.. Its function is as follows. DNA ligase that seals nicks in double-stranded DNA during DNA replication, DNA recombination and DNA repair. Can also use NAD, but less efficiently than ATP. This Thermococcus kodakarensis (strain ATCC BAA-918 / JCM 12380 / KOD1) (Pyrococcus kodakaraensis (strain KOD1)) protein is DNA ligase.